We begin with the raw amino-acid sequence, 380 residues long: E3 ubiquitin-protein ligase Iruka (380 aa).

The interval 50–92 is disordered; the sequence is APEMDSSTAGASGSARSGSSGSGSSGSHDTLSRGSSSSGSQVN. 2 stretches are compositionally biased toward low complexity: residues 55 to 68 and 74 to 89; these read SSTA…RSGS and SGSH…SSGS. The RING-type; atypical zinc finger occupies 253-294; it reads CSICWDDFKIDETVRKLPCSHLYHENCIVPWLNLHSTCPICR. The disordered stretch occupies residues 317–367; sequence EMAADGSNSERRSASTATGTDNPSPANNPSQAAAEGGRTRPDANPAQAARN. Over residues 338 to 350 the composition is skewed to low complexity; that stretch reads NPSPANNPSQAAA.

As to quaternary structure, interacts (via N-terminus) with CG7546 (via Ubl domain).

It catalyses the reaction S-ubiquitinyl-[E2 ubiquitin-conjugating enzyme]-L-cysteine + [acceptor protein]-L-lysine = [E2 ubiquitin-conjugating enzyme]-L-cysteine + N(6)-ubiquitinyl-[acceptor protein]-L-lysine.. Its pathway is protein modification; protein ubiquitination. E3 ubiquitin-protein ligase that mediates E2-dependent, 'Lys-48'- and/or 'Lys-63'-linked polyubiquitination of substrates. Recognizes miRNA-empty Ago1 and triggers its degradation via polyubiquitination independently of the Bag6 complex. By targeting miRNA-empty Ago1, eliminates dysfunctional Ago1 not able to bind miRNA and thereby plays a role in the quality control of miRNA-mediated silencing. The protein is E3 ubiquitin-protein ligase Iruka of Drosophila melanogaster (Fruit fly).